We begin with the raw amino-acid sequence, 136 residues long: Small ribosomal subunit protein uS9 (136 aa).

Residues 97 to 136 (SPDNRKPLKTEGHLSRDPRAKERRKYGLKKARKAPQFSKR) are disordered. Positions 98-116 (PDNRKPLKTEGHLSRDPRA) are enriched in basic and acidic residues. The segment covering 117–136 (KERRKYGLKKARKAPQFSKR) has biased composition (basic residues).

The protein belongs to the universal ribosomal protein uS9 family.

In Prochlorococcus marinus (strain MIT 9215), this protein is Small ribosomal subunit protein uS9.